Reading from the N-terminus, the 221-residue chain is UPF0502 protein Sputw3181_2381 (221 aa).

It belongs to the UPF0502 family.

The chain is UPF0502 protein Sputw3181_2381 from Shewanella sp. (strain W3-18-1).